The sequence spans 363 residues: Jasmonate-induced oxygenase 3 (363 aa).

In terms of domain architecture, Fe2OG dioxygenase spans 210-312 (ESGGCLRVNY…RLSLAFFYNP (103 aa)). Arg216 lines the jasmonate pocket. 2-oxoglutarate contacts are provided by Asn218 and Tyr220. Fe cation-binding residues include His235, Asp237, and His293. Positions 303 and 305 each coordinate 2-oxoglutarate. Residues Arg342 and Arg346 each contribute to the jasmonate site.

This sequence belongs to the iron/ascorbate-dependent oxidoreductase family. L-ascorbate is required as a cofactor. Fe(2+) serves as cofactor.

It carries out the reaction jasmonate + 2-oxoglutarate + O2 = (1R,2R)-12-hydroxyjasmonate + succinate + CO2. Functionally, 2-oxoglutarate-dependent dioxygenase involved in the oxidation of jasmonate (JA), a stress-induced phytohormone synthesized in response to attack by pathogens and herbivores, which triggers the activation of defense responses via the JA-mediated signaling pathway. Converts JA to 12-hydroxyjasmonate (12OH-JA), an inactive form of JA. Is specific to free JA, and cannot oxidize the bioactive form jasmonoyl-L-isoleucine (JA-Ile) or other JA-amino acid conjugates. Prevents over-accumulation of JA and indirectly its bioactive form JA-Ile under stress response. Acts as a negative regulator of JA-mediated defense signaling, by contributing to 12OH-JA accumulation, which represses JA defense responses upon infection by the fungal pathogen Botrytis cinerea. Acts as a negative regulator of JA-mediated defense responses upon infestation by the herbivorous caterpillar Mamestra brassicae. In Arabidopsis thaliana (Mouse-ear cress), this protein is Jasmonate-induced oxygenase 3.